The following is a 165-amino-acid chain: NADPH-dependent 7-cyano-7-deazaguanine reductase (165 aa).

Cys-56 acts as the Thioimide intermediate in catalysis. Asp-63 functions as the Proton donor in the catalytic mechanism. Residues 78–80 (VES) and 97–98 (HE) contribute to the substrate site.

The protein belongs to the GTP cyclohydrolase I family. QueF type 1 subfamily.

The protein resides in the cytoplasm. It carries out the reaction 7-aminomethyl-7-carbaguanine + 2 NADP(+) = 7-cyano-7-deazaguanine + 2 NADPH + 3 H(+). Its pathway is tRNA modification; tRNA-queuosine biosynthesis. Its function is as follows. Catalyzes the NADPH-dependent reduction of 7-cyano-7-deazaguanine (preQ0) to 7-aminomethyl-7-deazaguanine (preQ1). The protein is NADPH-dependent 7-cyano-7-deazaguanine reductase of Bacillus pumilus (strain SAFR-032).